Reading from the N-terminus, the 195-residue chain is Probable GTP-binding protein EngB (195 aa).

The region spanning 22 to 195 (GRPEVALAGR…WAALLPFLTE (174 aa)) is the EngB-type G domain. GTP-binding positions include 30-37 (GRSNVGKS), 57-61 (GKTQT), 75-78 (DVPG), 142-145 (TKAD), and 174-176 (FSS). Positions 37 and 59 each coordinate Mg(2+).

The protein belongs to the TRAFAC class TrmE-Era-EngA-EngB-Septin-like GTPase superfamily. EngB GTPase family. The cofactor is Mg(2+).

Functionally, necessary for normal cell division and for the maintenance of normal septation. The polypeptide is Probable GTP-binding protein EngB (Geobacillus thermodenitrificans (strain NG80-2)).